The chain runs to 118 residues: Urease subunit beta (118 aa).

This sequence belongs to the urease beta subunit family. Heterotrimer of UreA (gamma), UreB (beta) and UreC (alpha) subunits. Three heterotrimers associate to form the active enzyme.

It localises to the cytoplasm. The catalysed reaction is urea + 2 H2O + H(+) = hydrogencarbonate + 2 NH4(+). It participates in nitrogen metabolism; urea degradation; CO(2) and NH(3) from urea (urease route): step 1/1. This Aliivibrio fischeri (strain ATCC 700601 / ES114) (Vibrio fischeri) protein is Urease subunit beta.